A 155-amino-acid polypeptide reads, in one-letter code: SsrA-binding protein (155 aa).

The protein belongs to the SmpB family.

It localises to the cytoplasm. Functionally, required for rescue of stalled ribosomes mediated by trans-translation. Binds to transfer-messenger RNA (tmRNA), required for stable association of tmRNA with ribosomes. tmRNA and SmpB together mimic tRNA shape, replacing the anticodon stem-loop with SmpB. tmRNA is encoded by the ssrA gene; the 2 termini fold to resemble tRNA(Ala) and it encodes a 'tag peptide', a short internal open reading frame. During trans-translation Ala-aminoacylated tmRNA acts like a tRNA, entering the A-site of stalled ribosomes, displacing the stalled mRNA. The ribosome then switches to translate the ORF on the tmRNA; the nascent peptide is terminated with the 'tag peptide' encoded by the tmRNA and targeted for degradation. The ribosome is freed to recommence translation, which seems to be the essential function of trans-translation. This is SsrA-binding protein from Streptococcus pyogenes serotype M18 (strain MGAS8232).